We begin with the raw amino-acid sequence, 123 residues long: ATP synthase epsilon chain (123 aa).

Belongs to the ATPase epsilon chain family. In terms of assembly, F-type ATPases have 2 components, CF(1) - the catalytic core - and CF(0) - the membrane proton channel. CF(1) has five subunits: alpha(3), beta(3), gamma(1), delta(1), epsilon(1). CF(0) has three main subunits: a, b and c.

It is found in the cell inner membrane. Produces ATP from ADP in the presence of a proton gradient across the membrane. The chain is ATP synthase epsilon chain from Helicobacter pylori (strain HPAG1).